A 477-amino-acid polypeptide reads, in one-letter code: PTS system glucose-specific EIICB component (477 aa).

Residues 1-388 form the PTS EIIC type-1 domain; that stretch reads MFKNVFANLQ…FNLDTPGREN (388 aa). The next 10 helical transmembrane spans lie at 15–35, 51–71, 76–96, 112–132, 152–172, 191–211, 250–270, 280–300, 304–324, and 357–377; these read SLML…IGSA, TGGS…ALGF, GVAA…LTAV, HLSD…AYMF, FVPI…SLIW, PILA…FGLH, LSGG…AIWH, IGSI…TEPI, FIIV…LSFP, and FPII…LFII. A PTS EIIB type-1 domain is found at 399-477; the sequence is NEIAPYIITA…TAMDECIKNI (79 aa). Cys421 functions as the Phosphocysteine intermediate; for EIIB activity in the catalytic mechanism. Cys421 carries the post-translational modification Phosphocysteine.

The protein resides in the cell inner membrane. The enzyme catalyses N(pros)-phospho-L-histidyl-[protein] + D-glucose(out) = D-glucose 6-phosphate(in) + L-histidyl-[protein]. Its function is as follows. The phosphoenolpyruvate-dependent sugar phosphotransferase system (sugar PTS), a major carbohydrate active transport system, catalyzes the phosphorylation of incoming sugar substrates concomitantly with their translocation across the cell membrane. The enzyme II complex composed of PtsG and Crr is involved in glucose transport. The chain is PTS system glucose-specific EIICB component (ptsG) from Buchnera aphidicola subsp. Acyrthosiphon pisum (strain APS) (Acyrthosiphon pisum symbiotic bacterium).